A 199-amino-acid polypeptide reads, in one-letter code: Casparian strip membrane protein 2 (199 aa).

Residues 1–37 are Cytoplasmic-facing; that stretch reads MMRGSTEIDMPESSSVSKGTAPLIAAPMKEKGGYKKG. A helical membrane pass occupies residues 38–58; that stretch reads IAIFDFILRLAAIATALAAAA. Residues 59-87 lie on the Extracellular side of the membrane; that stretch reads SMGTSDETLPFFTQFFQFQASYDDLPTFQ. Residues 88-108 traverse the membrane as a helical segment; it reads FFVIAMAIVAGYLVLSLPFSI. Over 109-120 the chain is Cytoplasmic; the sequence is VAIVRPHAAGPR. A helical transmembrane segment spans residues 121–141; sequence LLLIILDTVALTLNTAAGAAA. The Extracellular portion of the chain corresponds to 142–173; it reads AAIVYLAHNGNSSTNWLAICQQFGDFCQKNSG. Asn152 carries N-linked (GlcNAc...) asparagine glycosylation. Residues 174–194 traverse the membrane as a helical segment; that stretch reads AVVASFITVVIFVFLLVLSAF. Topologically, residues 195 to 199 are cytoplasmic; it reads ALRRH.

This sequence belongs to the Casparian strip membrane proteins (CASP) family. Homodimer and heterodimers.

It is found in the cell membrane. In terms of biological role, regulates membrane-cell wall junctions and localized cell wall deposition. Required for establishment of the Casparian strip membrane domain (CSD) and the subsequent formation of Casparian strips, a cell wall modification of the root endodermis that determines an apoplastic barrier between the intraorganismal apoplasm and the extraorganismal apoplasm and prevents lateral diffusion. The chain is Casparian strip membrane protein 2 from Populus trichocarpa (Western balsam poplar).